The primary structure comprises 321 residues: NADH-ubiquinone oxidoreductase chain 1 (321 aa).

The next 8 membrane-spanning stretches (helical) occupy residues Ile9 to Leu29, Ile75 to Met95, Leu106 to Gly126, Thr151 to Phe171, His177 to Ala197, Val219 to Phe239, Pro256 to Trp276, and Tyr297 to Gly317.

This sequence belongs to the complex I subunit 1 family.

The protein resides in the mitochondrion inner membrane. It carries out the reaction a ubiquinone + NADH + 5 H(+)(in) = a ubiquinol + NAD(+) + 4 H(+)(out). Functionally, core subunit of the mitochondrial membrane respiratory chain NADH dehydrogenase (Complex I) that is believed to belong to the minimal assembly required for catalysis. Complex I functions in the transfer of electrons from NADH to the respiratory chain. The immediate electron acceptor for the enzyme is believed to be ubiquinone. The polypeptide is NADH-ubiquinone oxidoreductase chain 1 (MT-ND1) (Lycodon semicarinatus (Ryukyu odd-tooth snake)).